The primary structure comprises 921 residues: MEYKNTLLMPKTEFPMRGNLPKREPAMQEKWAEMNIYEKVQEHTKGRPLFVLHDGPPYANGDIHMGHALNKVLKDFIVRYKSMTGFSAPYVPGWDTHGLPIEQALTNKGVKRKEMTVAEFRKLCAEYAYEQVERQREQFKRLGVRADWDNPYITLEPAYEAQQIKVFGDMAKKGYIYKGQKPVYWSPTSESALAEAEIEYQDKKSASIYVAFPVKDGKNVLEGDEKYIIWTTTPWTLPANLGISVHPELEYSIVKVNDEKYIIASELFETVAKTLEWENAEVVKTVKGSELEYTVAKHPFYDRDSLVMLGDHVTTDAGTGCVHTAPGHGEDDFVVGKKYGLEVLCPVDDKGVLTNEAPGFEGLFYDKANKPITEKLEEVGALLKLTFITHSYPHDWRTKKPIIFRATAQWFASIEAFRKELIEAVAETKWVPAWGETRLHNMVRDRGDWCISRQRAWGVPIPVFYAENGDPIITDETINHVADLFREHGSNVWFEREAKDLLPEGFTHPGSPNGEFRKETDIMDVWFDSGSSHQAVLEEREDLQRPADLYLEGSDQYRGWFNSSLSTAVAVTGKAPYKGVLSHGFVLDGEGRKMSKSIGNIVVPKKIMDQLGGDILRLWVSSVDYQSDVRISDDILKQVAEVYRKIRNTFRFLLGNLDDFKPSENAVAVAELREVDRYMLVKLNDLITKVKEAYETYDFAAVYHAIHNFCTIDLSSFYLDFAKDILYIEGANHEDRRAIQTVLYDVLVALTKLVTPILPHTADEVWPYIPGVTEESVQLTDMPEAVQLDDAEALKTKWDAFMTLRDDVLKALEVARNEKVIGKSLNASITLYPTAEMKAMLESISEDLKQLFIVSEYKLGGMMDEAPADAPKYEHTAVVVAQATGETCERCWVVSETIGKDAEHETLCERCATVVKENYVK.

The short motif at 57–67 is the 'HIGH' region element; sequence PYANGDIHMGH. Glu-552 is a binding site for L-isoleucyl-5'-AMP. The short motif at 593-597 is the 'KMSKS' region element; sequence KMSKS. Position 596 (Lys-596) interacts with ATP. Cys-888, Cys-891, Cys-908, and Cys-911 together coordinate Zn(2+).

The protein belongs to the class-I aminoacyl-tRNA synthetase family. IleS type 1 subfamily. Monomer. Requires Zn(2+) as cofactor.

Its subcellular location is the cytoplasm. It carries out the reaction tRNA(Ile) + L-isoleucine + ATP = L-isoleucyl-tRNA(Ile) + AMP + diphosphate. Functionally, catalyzes the attachment of isoleucine to tRNA(Ile). As IleRS can inadvertently accommodate and process structurally similar amino acids such as valine, to avoid such errors it has two additional distinct tRNA(Ile)-dependent editing activities. One activity is designated as 'pretransfer' editing and involves the hydrolysis of activated Val-AMP. The other activity is designated 'posttransfer' editing and involves deacylation of mischarged Val-tRNA(Ile). The chain is Isoleucine--tRNA ligase from Bacillus cereus (strain B4264).